The following is a 460-amino-acid chain: MTDKLWGGRFTEKAAHWVDAFGASIGFDQQMAQEDLEGSLAHVKMLGKTGIIPQADADTITAGLQHLQKELAAGKLHFTVENEDIHLNMEALLTAEIGPVAGKLHTARSRNDQVATDLHLWLKHRLPTIKEALTNLQTVLVGQAKVHAATIMPGYTHMQHAQPITYGHYLLAYFEMFQRDWERFDFTQKHTDILPLGAAALAGTTFPIDRTLVAQELGFDQIYHNSLDAVSDRDFALEFLSNSAILMQHLSRMAEELILWSTYEFNYIELGDDFSTGSSIMPQKKNPDFAELIRGKTGRVYGALMGLLTTMKAIPLAYNKDMQEDKEPIFDAYNTILGSLHIFTGMLSDLTVHEKRMAEATTHDFSNATELADYLATKGVPFRQAHAIVGELVLKGIKTNTALQEMPLSELQAAAPQIQQDVYAELTSKAAVDRRTSLGGTAVSNVLKEVARDEEMIASH.

The protein belongs to the lyase 1 family. Argininosuccinate lyase subfamily.

The protein resides in the cytoplasm. It catalyses the reaction 2-(N(omega)-L-arginino)succinate = fumarate + L-arginine. It functions in the pathway amino-acid biosynthesis; L-arginine biosynthesis; L-arginine from L-ornithine and carbamoyl phosphate: step 3/3. The protein is Argininosuccinate lyase of Lacticaseibacillus paracasei (strain ATCC 334 / BCRC 17002 / CCUG 31169 / CIP 107868 / KCTC 3260 / NRRL B-441) (Lactobacillus paracasei).